The sequence spans 354 residues: uncharacterized protein (354 aa).

This is an uncharacterized protein from Rickettsia prowazekii (strain Madrid E).